The primary structure comprises 186 residues: Threonylcarbamoyl-AMP synthase (186 aa).

Residues 3-186 enclose the YrdC-like domain; it reads ELTLDSAVAT…DALSGNVLRS (184 aa).

It belongs to the SUA5 family. TsaC subfamily.

The protein localises to the cytoplasm. The enzyme catalyses L-threonine + hydrogencarbonate + ATP = L-threonylcarbamoyladenylate + diphosphate + H2O. Its function is as follows. Required for the formation of a threonylcarbamoyl group on adenosine at position 37 (t(6)A37) in tRNAs that read codons beginning with adenine. Catalyzes the conversion of L-threonine, HCO(3)(-)/CO(2) and ATP to give threonylcarbamoyl-AMP (TC-AMP) as the acyladenylate intermediate, with the release of diphosphate. The protein is Threonylcarbamoyl-AMP synthase of Stenotrophomonas maltophilia (strain K279a).